We begin with the raw amino-acid sequence, 186 residues long: Putative inactive recombination-promoting nuclease-like protein YjiQ (186 aa).

This sequence belongs to the Rpn/YhgA-like nuclease family.

This pseudogene is the C-terminal fragment of low activity DNA endonuclease RpnD which probably yields 3'-hydroxyl ends. The intact protein can be seen in this entry (AC B7NGZ6). Expression of the repaired protein increases the frequency of recA-independent recombination, but also decreases viability probably via DNA damage; in a RecA strain expression has no effect on viability but does induce the SOS repair response. May play a role in horizontal gene transfer. In Escherichia coli (strain K12), this protein is Putative inactive recombination-promoting nuclease-like protein YjiQ (yjiQ).